The following is a 2347-amino-acid chain: Proto-oncogene tyrosine-protein kinase ROS (2347 aa).

The first 27 residues, 1-27 (MKNIYCLIPKLVNFATLGCLWISVVQC), serve as a signal peptide directing secretion. Residues 28–1859 (TVLNSCLKSC…LVGDDFWIPE (1832 aa)) lie on the Extracellular side of the membrane. 3 N-linked (GlcNAc...) asparagine glycosylation sites follow: N52, N114, and N123. Fibronectin type-III domains follow at residues 101 to 196 (LPTA…VPET) and 197 to 285 (APLI…SSSA). N-linked (GlcNAc...) asparagine glycosylation is found at N324, N352, N396, N471, N607, N628, N706, N714, N732, N939, N961, N1015, N1087, N1090, N1095, N1211, N1272, N1330, N1458, N1461, N1474, N1499, N1565, N1669, N1715, N1738, and N1808. The region spanning 557–671 (LPGRPQELSV…EPSVGTTLVP (115 aa)) is the Fibronectin type-III 3 domain. Fibronectin type-III domains follow at residues 947–1042 (IPDS…TVPS) and 1043–1150 (APEN…TSEI). 4 Fibronectin type-III domains span residues 1450 to 1556 (DTVE…TKNG), 1557 to 1656 (VPEA…VEMF), 1658 to 1751 (TPEK…TKAG), and 1752 to 1854 (VPNK…VGDD). The chain crosses the membrane as a helical span at residues 1860–1882 (TSFILTIIVGIFLVVTIPLTFVW). Residues 1883 to 2347 (HRRLKNQKSA…THSGYGDGSD (465 aa)) lie on the Cytoplasmic side of the membrane. Positions 1945–2222 (LTLRLLLGSG…DQLQLFRNFF (278 aa)) constitute a Protein kinase domain. ATP-binding positions include 1951 to 1959 (LGSGAFGEV) and K1980. The active-site Proton acceptor is the D2079. Y2274 is subject to Phosphotyrosine; by autocatalysis. Residues 2284–2311 (GEEKSEGPLGSQESESCGLRKEEKEPHA) form a disordered region. Residues 2301-2311 (GLRKEEKEPHA) are compositionally biased toward basic and acidic residues. Y2334 is modified (phosphotyrosine; by autocatalysis).

This sequence belongs to the protein kinase superfamily. Tyr protein kinase family. Insulin receptor subfamily. Interacts with PTPN6 (via SH2 1 domain); the interaction is direct and promotes ROS1 dephosphorylation. Interacts with PTPN11; may activate the PI3 kinase-mTOR signaling pathway. Interacts with VAV3; constitutive interaction mediating VAV3 phosphorylation. Phosphorylated. Probably autophosphorylates. Phosphorylation at Tyr-2274 is required for the interaction with PTPN6 that mediates ROS1 dephosphorylation. Phosphorylation at Tyr-2274 stimulates the kinase activity and the activation of the ERK1 signaling cascade. Phosphorylation at Tyr-2274 and/or Tyr-2334 recruits PTPN11. As to expression, expressed in brain. Expression is increased in primary gliomas.

It is found in the cell membrane. The catalysed reaction is L-tyrosyl-[protein] + ATP = O-phospho-L-tyrosyl-[protein] + ADP + H(+). Its activity is regulated as follows. Inhibited by dephosphorylation by PTPN6. Its function is as follows. Receptor tyrosine kinase (RTK) that plays a role in epithelial cell differentiation and regionalization of the proximal epididymal epithelium. NELL2 is an endogenous ligand for ROS1. Upon endogenous stimulation by NELL2, ROS1 activates the intracellular signaling pathway and triggers epididymal epithelial differentiation and subsequent sperm maturation. May activate several downstream signaling pathways related to cell differentiation, proliferation, growth and survival including the PI3 kinase-mTOR signaling pathway. Mediates the phosphorylation of PTPN11, an activator of this pathway. May also phosphorylate and activate the transcription factor STAT3 to control anchorage-independent cell growth. Mediates the phosphorylation and the activation of VAV3, a guanine nucleotide exchange factor regulating cell morphology. May activate other downstream signaling proteins including AKT1, MAPK1, MAPK3, IRS1 and PLCG2. The protein is Proto-oncogene tyrosine-protein kinase ROS (ROS1) of Homo sapiens (Human).